We begin with the raw amino-acid sequence, 197 residues long: HTH-type transcriptional repressor BdcR (197 aa).

In terms of domain architecture, HTH tetR-type spans 15-75 (RFAPEQAISA…RVLNEYVGTE (61 aa)). Positions 38-57 (SVAEVTDYLGINPPSLYAAF) form a DNA-binding region, H-T-H motif.

Functionally, negatively regulates expression of bdcA. This chain is HTH-type transcriptional repressor BdcR (bdcR), found in Escherichia coli (strain K12).